We begin with the raw amino-acid sequence, 110 residues long: Iron-sulfur cluster assembly protein CyaY (110 aa).

The protein belongs to the frataxin family.

In terms of biological role, involved in iron-sulfur (Fe-S) cluster assembly. May act as a regulator of Fe-S biogenesis. This is Iron-sulfur cluster assembly protein CyaY from Pseudomonas fluorescens (strain Pf0-1).